The primary structure comprises 401 residues: Exodeoxyribonuclease 7 large subunit (401 aa).

This sequence belongs to the XseA family. In terms of assembly, heterooligomer composed of large and small subunits.

It is found in the cytoplasm. It catalyses the reaction Exonucleolytic cleavage in either 5'- to 3'- or 3'- to 5'-direction to yield nucleoside 5'-phosphates.. In terms of biological role, bidirectionally degrades single-stranded DNA into large acid-insoluble oligonucleotides, which are then degraded further into small acid-soluble oligonucleotides. This chain is Exodeoxyribonuclease 7 large subunit, found in Thermoanaerobacter sp. (strain X514).